The sequence spans 418 residues: Putative ion-transport protein YfeO (418 aa).

12 helical membrane passes run 10-30 (LLLS…LIVV), 54-74 (DSPI…GLVI), 99-119 (ALPG…SLGP), 120-140 (EHPI…RLLP), 149-169 (ILAS…AALI), 186-206 (LFAP…FFHP), 223-243 (ILSG…AVWC), 258-278 (VLVL…GGPV), 300-320 (DYFL…ASGF), 322-342 (GGRI…LHEH), 343-363 (VPAV…VLVV), and 371-391 (LFMA…CIVM).

The protein belongs to the chloride channel (TC 2.A.49) family.

It is found in the cell membrane. This Shigella sonnei (strain Ss046) protein is Putative ion-transport protein YfeO.